A 196-amino-acid chain; its full sequence is Putative NADH dehydrogenase/NAD(P)H nitroreductase Rpal_4764 (196 aa).

Belongs to the nitroreductase family. HadB/RutE subfamily. FMN is required as a cofactor.

This is Putative NADH dehydrogenase/NAD(P)H nitroreductase Rpal_4764 from Rhodopseudomonas palustris (strain TIE-1).